A 300-amino-acid polypeptide reads, in one-letter code: Type 1 fimbrin D-mannose specific adhesin (300 aa).

An N-terminal signal peptide occupies residues 1 to 21; sequence MKRVITLFAVLLMGWSVNAWS.

It belongs to the fimbrial protein family.

It is found in the fimbrium. Its function is as follows. Involved in regulation of length and mediation of adhesion of type 1 fimbriae (but not necessary for the production of fimbriae). Adhesin responsible for the binding to D-mannose. It is laterally positioned at intervals in the structure of the type 1 fimbriae. In order to integrate FimH in the fimbriae FimF and FimG are needed. In Escherichia coli (strain K12), this protein is Type 1 fimbrin D-mannose specific adhesin (fimH).